A 417-amino-acid polypeptide reads, in one-letter code: Argininosuccinate synthase (417 aa).

Residue 8–16 (AYSGGLDTS) coordinates ATP. Y87 is an L-citrulline binding site. Position 117 (G117) interacts with ATP. The L-aspartate site is built by T119, N123, and D124. N123 provides a ligand contact to L-citrulline. R127, S175, E259, and Y271 together coordinate L-citrulline.

It belongs to the argininosuccinate synthase family. Type 1 subfamily. As to quaternary structure, homotetramer.

The protein resides in the cytoplasm. The enzyme catalyses L-citrulline + L-aspartate + ATP = 2-(N(omega)-L-arginino)succinate + AMP + diphosphate + H(+). It participates in amino-acid biosynthesis; L-arginine biosynthesis; L-arginine from L-ornithine and carbamoyl phosphate: step 2/3. This is Argininosuccinate synthase from Clavibacter sepedonicus (Clavibacter michiganensis subsp. sepedonicus).